Consider the following 324-residue polypeptide: MSNLQLDQNGQLRHFLSIQGLNRELLTRILDTAESFSTIGAQHVKKVPLLRGKTIVNLFFENSTRTLSTFELAAKRLSADVMNLNVRTSSTQKGESLLDTLRSLEAMHCDMFVVRHSDSGAAYFIARHVPSHVSVINAGDGCHSHPSQAMLDMLTIRRHKGSFPNLRVAIVGDILHSRVARSEIHALATLGTGEIRVIAPRTLLPRNVESLGVHIFHDMRAGLKGVDVVITLRLQRERMEGARLPSEREYFQLYGLTEEKLALARPEAIVMHPGPINRGIEIESAVADGPHSVILEQVSHGIAIRMAVMAMTMQIPVPEAKEAR.

Residues Arg-65 and Thr-66 each contribute to the carbamoyl phosphate site. Lys-93 provides a ligand contact to L-aspartate. 3 residues coordinate carbamoyl phosphate: Arg-115, His-145, and Gln-148. 2 residues coordinate L-aspartate: Arg-178 and Arg-233. Residues Gly-274 and Pro-275 each contribute to the carbamoyl phosphate site.

It belongs to the aspartate/ornithine carbamoyltransferase superfamily. ATCase family. As to quaternary structure, heterododecamer (2C3:3R2) of six catalytic PyrB chains organized as two trimers (C3), and six regulatory PyrI chains organized as three dimers (R2).

The catalysed reaction is carbamoyl phosphate + L-aspartate = N-carbamoyl-L-aspartate + phosphate + H(+). It functions in the pathway pyrimidine metabolism; UMP biosynthesis via de novo pathway; (S)-dihydroorotate from bicarbonate: step 2/3. Its function is as follows. Catalyzes the condensation of carbamoyl phosphate and aspartate to form carbamoyl aspartate and inorganic phosphate, the committed step in the de novo pyrimidine nucleotide biosynthesis pathway. This is Aspartate carbamoyltransferase catalytic subunit from Nitrosococcus oceani (strain ATCC 19707 / BCRC 17464 / JCM 30415 / NCIMB 11848 / C-107).